The following is a 309-amino-acid chain: UDP-N-acetylenolpyruvoylglucosamine reductase (309 aa).

In terms of domain architecture, FAD-binding PCMH-type spans 34–221 (RVGGPAQVLF…TAAREAAQPI (188 aa)). Arg-179 is a catalytic residue. Ser-228 functions as the Proton donor in the catalytic mechanism. Glu-298 is an active-site residue.

It belongs to the MurB family. Requires FAD as cofactor.

It is found in the cytoplasm. The catalysed reaction is UDP-N-acetyl-alpha-D-muramate + NADP(+) = UDP-N-acetyl-3-O-(1-carboxyvinyl)-alpha-D-glucosamine + NADPH + H(+). Its pathway is cell wall biogenesis; peptidoglycan biosynthesis. Its function is as follows. Cell wall formation. This chain is UDP-N-acetylenolpyruvoylglucosamine reductase, found in Methylorubrum extorquens (strain PA1) (Methylobacterium extorquens).